A 58-amino-acid polypeptide reads, in one-letter code: Large ribosomal subunit protein uL30 (58 aa).

It belongs to the universal ribosomal protein uL30 family. In terms of assembly, part of the 50S ribosomal subunit.

The protein is Large ribosomal subunit protein uL30 of Phocaeicola vulgatus (strain ATCC 8482 / DSM 1447 / JCM 5826 / CCUG 4940 / NBRC 14291 / NCTC 11154) (Bacteroides vulgatus).